Here is a 152-residue protein sequence, read N- to C-terminus: Endoribonuclease YbeY (152 aa).

3 residues coordinate Zn(2+): His-113, His-117, and His-123.

Belongs to the endoribonuclease YbeY family. Requires Zn(2+) as cofactor.

It is found in the cytoplasm. Functionally, single strand-specific metallo-endoribonuclease involved in late-stage 70S ribosome quality control and in maturation of the 3' terminus of the 16S rRNA. This is Endoribonuclease YbeY from Paracidovorax citrulli (strain AAC00-1) (Acidovorax citrulli).